The chain runs to 455 residues: Argininosuccinate lyase (455 aa).

Belongs to the lyase 1 family. Argininosuccinate lyase subfamily.

The protein localises to the cytoplasm. The catalysed reaction is 2-(N(omega)-L-arginino)succinate = fumarate + L-arginine. It functions in the pathway amino-acid biosynthesis; L-arginine biosynthesis; L-arginine from L-ornithine and carbamoyl phosphate: step 3/3. This Shewanella baltica (strain OS155 / ATCC BAA-1091) protein is Argininosuccinate lyase.